The following is a 196-amino-acid chain: Hibernation-associated plasma protein HP-20 (196 aa).

The signal sequence occupies residues 1–23; the sequence is MTDVWRLAIFVLMVNVLNDQVSC. A Collagen-like domain is found at 25–63; the sequence is GPPGPVGYPGVPGVPGPRGPPGQPGAAGRPGDPGPKGPS. Pro residues predominate over residues 28–47; the sequence is GPVGYPGVPGVPGPRGPPGQ. Residues 28 to 64 form a disordered region; it reads GPVGYPGVPGVPGPRGPPGQPGAAGRPGDPGPKGPSV. Positions 67–196 constitute a C1q domain; that stretch reads PCRERSAFTV…IYFSGFLISS (130 aa).

Plasma; synthesized in the liver.

It localises to the secreted. Its function is as follows. Plasma proteins HP-20, HP-25, HP-27 and HP-55 form a 140 kDa complex via disulfide bonds in the plasma and are hibernation specific. The protein is Hibernation-associated plasma protein HP-20 of Tamias sibiricus (Siberian chipmunk).